Here is a 212-residue protein sequence, read N- to C-terminus: Orotate phosphoribosyltransferase (212 aa).

5-phospho-alpha-D-ribose 1-diphosphate-binding positions include Arg97, Lys101, His103, and 123 to 131 (DDLISTGGS). Ser127 is a binding site for orotate.

The protein belongs to the purine/pyrimidine phosphoribosyltransferase family. PyrE subfamily. In terms of assembly, homodimer. It depends on Mg(2+) as a cofactor.

It carries out the reaction orotidine 5'-phosphate + diphosphate = orotate + 5-phospho-alpha-D-ribose 1-diphosphate. Its pathway is pyrimidine metabolism; UMP biosynthesis via de novo pathway; UMP from orotate: step 1/2. In terms of biological role, catalyzes the transfer of a ribosyl phosphate group from 5-phosphoribose 1-diphosphate to orotate, leading to the formation of orotidine monophosphate (OMP). In Lactiplantibacillus plantarum (strain ATCC BAA-793 / NCIMB 8826 / WCFS1) (Lactobacillus plantarum), this protein is Orotate phosphoribosyltransferase.